The following is a 1158-amino-acid chain: Condensin complex subunit 1 (1158 aa).

Residues 800–826 are disordered; sequence HENTTSNDDHAMDEDLDDSPEEETLKD. A compositionally biased stretch (acidic residues) spans 810-826; that stretch reads AMDEDLDDSPEEETLKD.

It belongs to the CND1 (condensin subunit 1) family. Component of the condensin complex, which contains the cut14/smc2 and cut3/smc2 heterodimer, and three non SMC subunits that probably regulate the complex: cnd1, cnd2 and cnd3.

The protein resides in the nucleus. Its subcellular location is the cytoplasm. It localises to the chromosome. Functionally, regulatory subunit of the condensin complex, a complex required for conversion of interphase chromatin into mitotic-like condense chromosomes. The condensin complex probably introduces positive supercoils into relaxed DNA in the presence of type I topoisomerases and converts nicked DNA into positive knotted forms in the presence of type II topoisomerases. The condensin complex probably also plays a role during interphase. This Schizosaccharomyces pombe (strain 972 / ATCC 24843) (Fission yeast) protein is Condensin complex subunit 1 (cnd1).